A 478-amino-acid polypeptide reads, in one-letter code: V-type proton ATPase subunit H (478 aa).

This sequence belongs to the V-ATPase H subunit family. V-ATPase is a heteromultimeric enzyme composed of a peripheral catalytic V1 complex (components A to H) attached to an integral membrane V0 proton pore complex (components: a, c, c', c'', d, e, f and VOA1). Interacts with YND1.

The protein resides in the vacuole membrane. Functionally, subunit of the V1 complex of vacuolar(H+)-ATPase (V-ATPase), a multisubunit enzyme composed of a peripheral complex (V1) that hydrolyzes ATP and a membrane integral complex (V0) that translocates protons. V-ATPase is responsible for acidifying and maintaining the pH of intracellular compartments. This subunit is essential for activity, but not assembly, of the enzyme complex. This subunit is also required for silencing the ATPase activity of V-ATPase when V1 is detached from V0. This chain is V-type proton ATPase subunit H, found in Saccharomyces cerevisiae (strain ATCC 204508 / S288c) (Baker's yeast).